A 373-amino-acid polypeptide reads, in one-letter code: 3-isopropylmalate dehydrogenase gloI (373 aa).

Substrate is bound by residues serine 92, arginine 98, and arginine 108. Residues aspartate 228, aspartate 253, and aspartate 257 each coordinate Mg(2+). NADP(+) is bound by residues 294-300 (HGSAPDI) and asparagine 307.

Belongs to the isocitrate and isopropylmalate dehydrogenases family. Homodimer. Mg(2+) serves as cofactor. The cofactor is Mn(2+).

The catalysed reaction is (2R,3S)-3-isopropylmalate + NAD(+) = 4-methyl-2-oxopentanoate + CO2 + NADH. Its pathway is mycotoxin biosynthesis. Its function is as follows. 3-isopropylmalate dehydrogenase; part of the gene cluster that mediates the biosynthesis of pneumocandins, lipohexapeptides of the echinocandin family that prevent fungal cell wall formation by non-competitive inhibition of beta-1,3-glucan synthase. The 10,12-dimethylmyristoyl side chain is synthesized by the reducing polyketide synthase gloL/GLPKS4. The thioesterase gloN/GLHYD exclusively interacts with gloL/GLPKS4 to maintain turnover of the polyketide side chain. The 10R,12S-dimethylmyristic acid is then transferred to the first thiolation domain of the nonribosomal peptide synthetase gloA/GLNRPS4 by the acyl-AMP ligase gloD/GLligase, followed by its acylation to L-ornithine to trigger elongation of the cyclic hexapeptide. L-ornithine, 4R-hydroxyl-L-proline (generated from L-proline by the dioxygenase gloF/GLOXY2), 3S-hydroxyl-L-homotyrosine (generated by gloG/GLHtyB, gloH/GLHtyA, gloI/GLHtyC, gloJ/GLHtyD and hydroxylated at C-3 by the dioxygenase gloM/GLOXY1), 3R-hydroxyl-L-glutamine (generated from L-glutamine probably by the dioxygenase gloE/GLOXY3) and 3S-hydroxyl-L-proline (generated from L-proline by the dioxygenase gloF/GLOXY2 to yield pneumocandin B0), or 3S-hydroxyl-4S-methyl-L-proline (generated from L-leucine by the dioxygenase gloC/GLOXY4 to yield pneumocandin A0) are sequentially added to the growing chain. The last C domain of gloA/GLNRPS4 is proposed to be responsible for cyclization by condensation to form the peptide bond between L-ornithine and 3S-hydroxyl-4S-methyl-L-proline (for pneumocandin A0) or 3S-hydroxyl-L-proline (for pneumocandin B0). Finally, the subsequent C-4 hydroxylation of 3S-hydroxyl-L-homotyrosine and L-ornithine dihydroxylation at C-4 and C-5 are performed by the cytochrome P450 monooxygenases gloP/GLP450-1 and gloO/GLP450-2, respectively. The polypeptide is 3-isopropylmalate dehydrogenase gloI (Glarea lozoyensis (strain ATCC 20868 / MF5171)).